The primary structure comprises 748 residues: Malate synthase G (748 aa).

Residues Val141, 148–149 (RF), Ser298, and Arg335 contribute to the acetyl-CoA site. Arg362 (proton acceptor) is an active-site residue. Residues Arg362, Glu453, and 478–481 (GFLD) each bind glyoxylate. Mg(2+)-binding residues include Glu453 and Asp481. An acetyl-CoA-binding site is contributed by Pro562. Cys639 bears the Cysteine sulfenic acid (-SOH) mark. Asp653 functions as the Proton donor in the catalytic mechanism.

The protein belongs to the malate synthase family. GlcB subfamily. As to quaternary structure, monomer. Requires Mg(2+) as cofactor.

The protein localises to the cytoplasm. It catalyses the reaction glyoxylate + acetyl-CoA + H2O = (S)-malate + CoA + H(+). Its pathway is carbohydrate metabolism; glyoxylate cycle; (S)-malate from isocitrate: step 2/2. In terms of biological role, involved in the glycolate utilization. Catalyzes the condensation and subsequent hydrolysis of acetyl-coenzyme A (acetyl-CoA) and glyoxylate to form malate and CoA. In Corynebacterium efficiens (strain DSM 44549 / YS-314 / AJ 12310 / JCM 11189 / NBRC 100395), this protein is Malate synthase G.